The chain runs to 233 residues: Probable 2-phosphosulfolactate phosphatase (233 aa).

Belongs to the ComB family. Requires Mg(2+) as cofactor.

The catalysed reaction is (2R)-O-phospho-3-sulfolactate + H2O = (2R)-3-sulfolactate + phosphate. The sequence is that of Probable 2-phosphosulfolactate phosphatase from Symbiobacterium thermophilum (strain DSM 24528 / JCM 14929 / IAM 14863 / T).